We begin with the raw amino-acid sequence, 126 residues long: Small ribosomal subunit protein uS13 (126 aa).

Positions 92 to 126 are disordered; that stretch reads HRRGLPVRGQRTKTNARTRKGPKRTVAGKKKAGRK.

The protein belongs to the universal ribosomal protein uS13 family. As to quaternary structure, part of the 30S ribosomal subunit. Forms a loose heterodimer with protein S19. Forms two bridges to the 50S subunit in the 70S ribosome.

In terms of biological role, located at the top of the head of the 30S subunit, it contacts several helices of the 16S rRNA. In the 70S ribosome it contacts the 23S rRNA (bridge B1a) and protein L5 of the 50S subunit (bridge B1b), connecting the 2 subunits; these bridges are implicated in subunit movement. Contacts the tRNAs in the A and P-sites. This Kineococcus radiotolerans (strain ATCC BAA-149 / DSM 14245 / SRS30216) protein is Small ribosomal subunit protein uS13.